Consider the following 85-residue polypeptide: Large ribosomal subunit protein bL27 (85 aa).

The disordered stretch occupies residues Met1 to Arg20.

This sequence belongs to the bacterial ribosomal protein bL27 family.

The sequence is that of Large ribosomal subunit protein bL27 from Citrobacter koseri (strain ATCC BAA-895 / CDC 4225-83 / SGSC4696).